Reading from the N-terminus, the 208-residue chain is Large ribosomal subunit protein bL9 (208 aa).

The tract at residues 168 to 208 (GKVEKGSCTEGESLELGSVDNDINSGNVDSNESEKQDSVSE) is disordered. Polar residues predominate over residues 188–197 (NDINSGNVDS). Over residues 199–208 (ESEKQDSVSE) the composition is skewed to basic and acidic residues.

Belongs to the bacterial ribosomal protein bL9 family.

In terms of biological role, binds to the 23S rRNA. The polypeptide is Large ribosomal subunit protein bL9 (Ehrlichia chaffeensis (strain ATCC CRL-10679 / Arkansas)).